The following is a 96-amino-acid chain: Putative septation protein SpoVG (96 aa).

Belongs to the SpoVG family.

In terms of biological role, could be involved in septation. This is Putative septation protein SpoVG from Geobacillus sp. (strain WCH70).